Reading from the N-terminus, the 897-residue chain is Leucine--tRNA ligase (897 aa).

A 'HIGH' region motif is present at residues Pro42 to His52. The 'KMSKS' region signature appears at Thr645–Ser649. Lys648 is an ATP binding site.

It belongs to the class-I aminoacyl-tRNA synthetase family.

It localises to the cytoplasm. The enzyme catalyses tRNA(Leu) + L-leucine + ATP = L-leucyl-tRNA(Leu) + AMP + diphosphate. In Paracidovorax citrulli (strain AAC00-1) (Acidovorax citrulli), this protein is Leucine--tRNA ligase.